The sequence spans 545 residues: Methionine--tRNA ligase (545 aa).

Positions 10–20 (PYANGSLHIGH) match the 'HIGH' region motif. Residues C141, C144, C153, and C156 each coordinate Zn(2+). Residues 329–333 (KISTS) carry the 'KMSKS' region motif. T332 is a binding site for ATP.

The protein belongs to the class-I aminoacyl-tRNA synthetase family. MetG type 1 subfamily. Monomer. Zn(2+) is required as a cofactor.

It is found in the cytoplasm. The enzyme catalyses tRNA(Met) + L-methionine + ATP = L-methionyl-tRNA(Met) + AMP + diphosphate. Functionally, is required not only for elongation of protein synthesis but also for the initiation of all mRNA translation through initiator tRNA(fMet) aminoacylation. In Streptococcus pneumoniae (strain 70585), this protein is Methionine--tRNA ligase.